Reading from the N-terminus, the 190-residue chain is RING finger protein 227 (190 aa).

The RING-type zinc-finger motif lies at 18–81 (CNICYRPFNL…RRVVTCPFCR (64 aa)). Residues 111-145 (KCERDEAGNPAKESSDADGEAEEEGESEKGAGPRS) form a disordered region. Acidic residues predominate over residues 126–136 (DADGEAEEEGE).

This is RING finger protein 227 from Homo sapiens (Human).